Consider the following 400-residue polypeptide: Large envelope protein (400 aa).

M1 carries the N-acetylmethionine modification. G2 is lipidated: N-myristoyl glycine; by host. The tract at residues 2 to 119 (GAPLSTTRRG…PPLRDTHPQA (118 aa)) is pre-S1. The pre-S stretch occupies residues 2 to 174 (GAPLSTTRRG…FSKTGGPAMN (173 aa)). Topologically, residues 2 to 181 (GAPLSTTRRG…AMNMDNITSG (180 aa)) are virion surface; in external conformation. The Intravirion; in internal conformation segment spans residues 2–253 (GAPLSTTRRG…PGYRWMCLRR (252 aa)). Residue P4 is glycosylated (N-linked (GlcNAc...) asparagine). Residues 84 to 117 (VLTTLPADPPPASTNRRSGRKPTPVSPPLRDTHP) are disordered. The segment at 120 to 174 (MQWNSTQFHQALLDPRVRALYFPAGGSSSGTQNPAPTIASLTSSIFSKTGGPAMN) is pre-S2. Residues 182-202 (LLGPLLVLQAVCFLLTKILTI) traverse the membrane as a helical segment. Over 203-253 (PQSLDSWWTSLNFLGGLPGCPGQNSQSPTSNHLPTSCPPTCPGYRWMCLRR) the chain is Intravirion; in external conformation. Residues 254 to 274 (FIIFLFILLLCLIFLLVLLDY) traverse the membrane as a helical segment. The Virion surface segment spans residues 275-348 (QGMLPVCPLL…WASARFSWLS (74 aa)). N320 carries an N-linked (GlcNAc...) asparagine; by host glycan. The chain crosses the membrane as a helical span at residues 349 to 369 (LLVQFVQWCVGLSPTVWLLVI). At 370-375 (WMIWYW) the chain is on the intravirion side. The chain crosses the membrane as a helical span at residues 376 to 398 (GPNLCSILSPFIPLLPIFCYLWV). Topologically, residues 399 to 400 (SI) are virion surface.

It belongs to the orthohepadnavirus major surface antigen family. As to quaternary structure, in its internal form (Li-HBsAg), interacts with the capsid protein and with the isoform S. Interacts with host chaperone CANX. Associates with host chaperone CANX through its pre-S2 N glycan; this association may be essential for isoform M proper secretion. In terms of assembly, interacts with isoform L. Interacts with the antigens of satellite virus HDV (HDVAgs); this interaction is required for encapsidation of HDV genomic RNA. In terms of processing, isoform M is N-terminally acetylated by host at a ratio of 90%, and N-glycosylated by host at the pre-S2 region. Post-translationally, myristoylated.

It localises to the virion membrane. Functionally, the large envelope protein exists in two topological conformations, one which is termed 'external' or Le-HBsAg and the other 'internal' or Li-HBsAg. In its external conformation the protein attaches the virus to cell receptors and thereby initiating infection. This interaction determines the species specificity and liver tropism. This attachment induces virion internalization predominantly through caveolin-mediated endocytosis. The large envelope protein also assures fusion between virion membrane and endosomal membrane. In its internal conformation the protein plays a role in virion morphogenesis and mediates the contact with the nucleocapsid like a matrix protein. In terms of biological role, the middle envelope protein plays an important role in the budding of the virion. It is involved in the induction of budding in a nucleocapsid independent way. In this process the majority of envelope proteins bud to form subviral lipoprotein particles of 22 nm of diameter that do not contain a nucleocapsid. In Hepatitis B virus genotype F2 (isolate Brazil/w4B) (HBV-F), this protein is Large envelope protein.